Here is a 155-residue protein sequence, read N- to C-terminus: MHCPFCAANDTKVIDSRLVAEGDQVRRRRECVACGERFTTFETAELVMPRLIKQDGSRQPFDEEKLRAGMQRALEKRPVSVERLEEAIARIKQQLRATGEREVKSLVLGELVMTELSKLDEVAYIRFASVYRRFQDLNEFREEIERLAREPSKSR.

A zinc finger spans residues 3–34 (CPFCAANDTKVIDSRLVAEGDQVRRRRECVAC). Residues 49 to 139 (PRLIKQDGSR…VYRRFQDLNE (91 aa)) enclose the ATP-cone domain.

This sequence belongs to the NrdR family. It depends on Zn(2+) as a cofactor.

Its function is as follows. Negatively regulates transcription of bacterial ribonucleotide reductase nrd genes and operons by binding to NrdR-boxes. This is Transcriptional repressor NrdR from Ectopseudomonas mendocina (strain ymp) (Pseudomonas mendocina).